The following is a 591-amino-acid chain: Dihydroxyacetone kinase 2 (591 aa).

Positions 8–344 (SDGNIVTPYL…FDYPTTASGW (337 aa)) constitute a DhaK domain. Residues 40–59 (ASAPNSGNPPKVSLVSGGGS) are disordered. Substrate-binding positions include 58–61 (GSGH), lysine 109, and aspartate 114. Histidine 223 serves as the catalytic Tele-hemiaminal-histidine intermediate. In terms of domain architecture, DhaL spans 384–587 (DTFAKILLAG…LAALLDGFVT (204 aa)). Residues 413–416 (DGDC), 459–460 (TS), 511–512 (TL), and 572–574 (DPG) contribute to the ATP site.

This sequence belongs to the dihydroxyacetone kinase (DAK) family.

The enzyme catalyses dihydroxyacetone + ATP = dihydroxyacetone phosphate + ADP + H(+). It carries out the reaction D-glyceraldehyde + ATP = D-glyceraldehyde 3-phosphate + ADP + H(+). The protein operates within polyol metabolism; glycerol fermentation; glycerone phosphate from glycerol (oxidative route): step 2/2. Functionally, catalyzes both the phosphorylation of dihydroxyacetone and of glyceraldehyde. This Saccharomyces cerevisiae (strain ATCC 204508 / S288c) (Baker's yeast) protein is Dihydroxyacetone kinase 2 (DAK2).